Consider the following 215-residue polypeptide: Adenylate kinase (215 aa).

10 to 15 is an ATP binding site; it reads GAGKGT. Residues 30 to 59 are NMP; it reads STGDILRENVKNQTELGKKAKEYMDKGLLV. AMP is bound by residues Thr31, Arg36, 57–59, 85–88, and Gln92; these read LLV and GFPR. The segment at 126–163 is LID; sequence GRRICKSCGASFHVVYRPPKKEGICDICGGQLYQREDD. Arg127 contributes to the ATP binding site. Zn(2+)-binding residues include Cys130 and Cys133. Position 136 to 137 (136 to 137) interacts with ATP; that stretch reads SF. Zn(2+) is bound by residues Cys150 and Cys153. 2 residues coordinate AMP: Arg160 and Arg171. Glu199 provides a ligand contact to ATP.

This sequence belongs to the adenylate kinase family. As to quaternary structure, monomer.

Its subcellular location is the cytoplasm. It catalyses the reaction AMP + ATP = 2 ADP. Its pathway is purine metabolism; AMP biosynthesis via salvage pathway; AMP from ADP: step 1/1. Its function is as follows. Catalyzes the reversible transfer of the terminal phosphate group between ATP and AMP. Plays an important role in cellular energy homeostasis and in adenine nucleotide metabolism. In Caldicellulosiruptor saccharolyticus (strain ATCC 43494 / DSM 8903 / Tp8T 6331), this protein is Adenylate kinase.